Here is a 187-residue protein sequence, read N- to C-terminus: MNLQHHFLIAMPSLQDPQFKRSVIYICEHGEKGAMGLVINKPLEQLTVETILEKLKIKSPSRDPAIRLDNVVLAGGPLAEDRGFILHSPQEGFASSIHISPETMITTSKDVLETLGTSGQPKNLLVALGYASWRQGQLEQELLDNVWLTTEADTHILFNTPIAERWQAAANKLGINIFNIAPQAGHA.

This sequence belongs to the UPF0301 (AlgH) family.

This is UPF0301 protein YPO0936/y3322/YP_3506 from Yersinia pestis.